Reading from the N-terminus, the 374-residue chain is 5-aminosalicylate 1,2-dioxygenase (374 aa).

It belongs to the gentisate 1,2-dioxygenase family. The cofactor is Fe(2+).

It catalyses the reaction 5-amino-2-hydroxybenzoate + O2 = (2Z,4E)-4-amino-6-oxohepta-2,4-dienedioate + H(+). Its activity is regulated as follows. Inhibited by SDS and o-phenanthroline, a ferrous iron chelator. Partially inhibited by EDTA. Functionally, involved in the biodegradation of 3-aminobenzoate. Catalyzes the cleavage of the 5-aminosalicylate (5ASA) aromatic ring to form 4-amino-6-oxohepta-2,4-dienedioate (cis-ACOHDA). Can also convert gentisate, but the catalytic efficiency with 5ASA is 70-fold higher. This is 5-aminosalicylate 1,2-dioxygenase from Comamonas sp.